A 404-amino-acid chain; its full sequence is Cysteine desulfurase IscS (404 aa).

Pyridoxal 5'-phosphate contacts are provided by residues 75 to 76, Asn155, Gln183, and 203 to 205; these read AT and SGH. Lys206 is subject to N6-(pyridoxal phosphate)lysine. Thr243 provides a ligand contact to pyridoxal 5'-phosphate. Residue Cys328 is the Cysteine persulfide intermediate of the active site. Residue Cys328 coordinates [2Fe-2S] cluster.

It belongs to the class-V pyridoxal-phosphate-dependent aminotransferase family. NifS/IscS subfamily. As to quaternary structure, homodimer. Forms a heterotetramer with IscU, interacts with other sulfur acceptors. Pyridoxal 5'-phosphate serves as cofactor.

Its subcellular location is the cytoplasm. It catalyses the reaction (sulfur carrier)-H + L-cysteine = (sulfur carrier)-SH + L-alanine. It functions in the pathway cofactor biosynthesis; iron-sulfur cluster biosynthesis. Its function is as follows. Master enzyme that delivers sulfur to a number of partners involved in Fe-S cluster assembly, tRNA modification or cofactor biosynthesis. Catalyzes the removal of elemental sulfur atoms from cysteine to produce alanine. Functions as a sulfur delivery protein for Fe-S cluster synthesis onto IscU, an Fe-S scaffold assembly protein, as well as other S acceptor proteins. The sequence is that of Cysteine desulfurase IscS from Shewanella frigidimarina (strain NCIMB 400).